The primary structure comprises 137 residues: Large ribosomal subunit protein uL16 (137 aa).

Belongs to the universal ribosomal protein uL16 family. In terms of assembly, part of the 50S ribosomal subunit.

In terms of biological role, binds 23S rRNA and is also seen to make contacts with the A and possibly P site tRNAs. This chain is Large ribosomal subunit protein uL16, found in Hydrogenovibrio crunogenus (strain DSM 25203 / XCL-2) (Thiomicrospira crunogena).